We begin with the raw amino-acid sequence, 370 residues long: Gibberellin 3-beta-dioxygenase 2-1 (370 aa).

Positions 205 to 306 (MTATMHLNWY…RISLGYFLGP (102 aa)) constitute a Fe2OG dioxygenase domain. Fe cation is bound by residues histidine 229, aspartate 231, and histidine 287. Arginine 297 is a catalytic residue.

Belongs to the iron/ascorbate-dependent oxidoreductase family. GA3OX subfamily. The cofactor is L-ascorbate. Fe cation serves as cofactor. Expressed in internodes, nodes and the ear of the elongating stem.

It carries out the reaction gibberellin A20 + 2-oxoglutarate + O2 = gibberellin A1 + succinate + CO2. Converts the inactive gibberellin precursors GA9 and GA20 in the bioactives gibberellins GA4 and GA1. Also accepts GA15, GA44, the 2,3-unsaturated GA5 and 2,3-dihydroGA9 as substrate. No activity with GA12, GA53, GA24, GA19 and GA25. Also possesses 2-beta-hydroxylase, 2,3-desaturase, 2,3-epoxidase and 13-hydroxylase activities. The chain is Gibberellin 3-beta-dioxygenase 2-1 (GA3ox2-1) from Triticum aestivum (Wheat).